The chain runs to 396 residues: Probable sugar efflux transporter (396 aa).

12 helical membrane passes run 15-35, 50-70, 81-101, 103-123, 136-156, 170-190, 209-229, 246-266, 275-295, 299-319, 333-353, and 364-384; these read VVTL…PVGL, VGIM…PFML, LICL…SWSF, VLVI…SITA, AQAL…GLPL, FFAI…LLPL, PALM…YTAY, FATA…VIFG, ALVS…LPAA, IHLG…GLGM, VAMA…ALVG, and MIGY…IIIF.

Belongs to the major facilitator superfamily. SotB (TC 2.A.1.2) family.

The protein resides in the cell inner membrane. Its function is as follows. Involved in the efflux of sugars. The physiological role may be the reduction of the intracellular concentration of toxic sugars or sugar metabolites. In Escherichia coli O157:H7 (strain EC4115 / EHEC), this protein is Probable sugar efflux transporter.